The primary structure comprises 816 residues: Subtilisin-like protease SBT2.6 (816 aa).

An N-terminal signal peptide occupies residues 1–19 (MDIGCKVLVFFTCFLTVTA). Positions 20–126 (EIYIVTMEGE…VDRDWKVRKL (107 aa)) are cleaved as a propeptide — activation peptide. The Inhibitor I9 domain occupies 22–124 (YIVTMEGEPI…KSVDRDWKVR (103 aa)). Residues 120–672 (DWKVRKLTTH…SGHVNPSAAL (553 aa)) form the Peptidase S8 domain. Residues aspartate 160 and histidine 235 each act as charge relay system in the active site. The region spanning 418-492 (DCQKPEVLNK…SCIPGILITD (75 aa)) is the PA domain. N-linked (GlcNAc...) asparagine glycans are attached at residues asparagine 504 and asparagine 578. Serine 597 serves as the catalytic Charge relay system. N-linked (GlcNAc...) asparagine glycosylation occurs at asparagine 702.

Belongs to the peptidase S8 family.

It localises to the secreted. This is Subtilisin-like protease SBT2.6 from Arabidopsis thaliana (Mouse-ear cress).